The following is a 191-amino-acid chain: Ion-translocating oxidoreductase complex subunit B (191 aa).

The hydrophobic stretch occupies residues 1–26; the sequence is MSSLWIAIAAVSAIALVSGLILGFAA. Positions 32–90 constitute a 4Fe-4S domain; it reads EADPIVERIDALLPQSQCGQCGYPGCRPYAEAVANGEKINRCAPGGEAVMRNIAALLAV. C49, C52, C57, C73, C116, C119, C122, C126, C146, C149, C152, and C156 together coordinate [4Fe-4S] cluster. 2 consecutive 4Fe-4S ferredoxin-type domains span residues 107 to 136 and 137 to 166; these read QVAL…GATR and ALHT…LVPV.

Belongs to the 4Fe4S bacterial-type ferredoxin family. RnfB subfamily. In terms of assembly, the complex is composed of six subunits: RnfA, RnfB, RnfC, RnfD, RnfE and RnfG. The cofactor is [4Fe-4S] cluster.

It is found in the cell inner membrane. Part of a membrane-bound complex that couples electron transfer with translocation of ions across the membrane. The polypeptide is Ion-translocating oxidoreductase complex subunit B (Edwardsiella ictaluri (strain 93-146)).